The sequence spans 822 residues: Serine/threonine-protein kinase kin-29 (822 aa).

Residues 16–267 form the Protein kinase domain; it reads YDVGRAIGKG…IQNVLQHRWM (252 aa). Residues 22 to 30 and K45 contribute to the ATP site; that span reads IGKGNFATV. D138 (proton acceptor) is an active-site residue. 3 disordered regions span residues 348–367, 389–423, and 577–602; these read EGTG…LSGK, LSSP…RQFG, and NPIP…WASP. The span at 394 to 406 shows a compositional bias: acidic residues; it reads CDSDDSSNSDLCD.

The protein belongs to the protein kinase superfamily. CAMK Ser/Thr protein kinase family. SNF1 subfamily. Interacts with tax-6. Mg(2+) is required as a cofactor. In terms of processing, autophosphorylated. Elevated cAMP levels appears to act via PKA to directly or indirectly phosphorylate multiple sites on kin-29 and inhibit function. Primarily neuronal, with additional expression in body wall muscle and hypodermal cells. Among neuronal cells, expressed in multiple sensory neurons and interneurons in the lateral, anterior, and lumbar ganglia, as well as in motor neurons in the ventral motor cord. Present in the AWB and AWC olfactory neurons.

The protein resides in the cytoplasm. It localises to the nucleus. It carries out the reaction L-seryl-[protein] + ATP = O-phospho-L-seryl-[protein] + ADP + H(+). The catalysed reaction is L-threonyl-[protein] + ATP = O-phospho-L-threonyl-[protein] + ADP + H(+). Its function is as follows. Regulates chemoreceptor expression by phosphorylating the hda-4 class II histone deacetylase (HDAC) and inhibiting the gene repression functions of hda-4 and the mef-2 transcription factor, enabling the correct sensing and transduction of food signals. Role in determining body size, the dauer decision and serotonin-mediated egg laying. May modulate the Sma/Mab pathway and regulates development in the later larval stages. This is Serine/threonine-protein kinase kin-29 from Caenorhabditis elegans.